Consider the following 71-residue polypeptide: Small ribosomal subunit protein bS21 (71 aa).

The protein belongs to the bacterial ribosomal protein bS21 family.

This Chromohalobacter salexigens (strain ATCC BAA-138 / DSM 3043 / CIP 106854 / NCIMB 13768 / 1H11) protein is Small ribosomal subunit protein bS21.